The primary structure comprises 432 residues: Trigger factor (432 aa).

Positions 161 to 246 (DDRVTIDFVG…LKKVENMVLP (86 aa)) constitute a PPIase FKBP-type domain.

This sequence belongs to the FKBP-type PPIase family. Tig subfamily.

The protein resides in the cytoplasm. The enzyme catalyses [protein]-peptidylproline (omega=180) = [protein]-peptidylproline (omega=0). Its function is as follows. Involved in protein export. Acts as a chaperone by maintaining the newly synthesized protein in an open conformation. Functions as a peptidyl-prolyl cis-trans isomerase. The chain is Trigger factor from Haemophilus influenzae (strain PittGG).